A 319-amino-acid chain; its full sequence is tRNA uridine(34) hydroxylase (319 aa).

Positions 125–219 (LDENTVVIDA…YGKDPEVQGD (95 aa)) constitute a Rhodanese domain. The active-site Cysteine persulfide intermediate is the Cys-179.

It belongs to the TrhO family.

The enzyme catalyses uridine(34) in tRNA + AH2 + O2 = 5-hydroxyuridine(34) in tRNA + A + H2O. In terms of biological role, catalyzes oxygen-dependent 5-hydroxyuridine (ho5U) modification at position 34 in tRNAs. This chain is tRNA uridine(34) hydroxylase, found in Lactococcus lactis subsp. lactis (strain IL1403) (Streptococcus lactis).